Here is a 197-residue protein sequence, read N- to C-terminus: Amino-terminal enhancer of split (197 aa).

Residues 1-15 (MMFPQSSSRHSGSSH) show a composition bias toward low complexity. Disordered stretches follow at residues 1–20 (MMFP…PQQL) and 169–197 (LGSQ…DKSD). Residues 166 to 197 (LSALGSQGHLPKEDKNGHEGDRRPDDDGDKSD) form a CCN domain region. Over residues 175–197 (LPKEDKNGHEGDRRPDDDGDKSD) the composition is skewed to basic and acidic residues.

Belongs to the WD repeat Groucho/TLE family. In terms of assembly, monomer. Post-translationally, ubiquitinated by XIAP/BIRC4. Predominantly expressed in brain, testis and ovary. Ubiquitously expressed in the developing embryo. Present in unfertilized and fertilized eggs.

The protein resides in the nucleus. Its function is as follows. May act as a transcriptional corepressor. Has a possible role in the negative regulation of proteins containing WD-40 repeats. May be required for the initiation and maintenance of the differentiated state. The chain is Amino-terminal enhancer of split (aes) from Xenopus laevis (African clawed frog).